Reading from the N-terminus, the 22-residue chain is 2.39 kDa venom peptide (22 aa).

In terms of processing, contains 2 disulfide bonds. As to expression, expressed by the venom gland.

The protein resides in the secreted. In terms of biological role, not lethal to mice by intraperitoneal or intracerebroventricular injections in doses up to 100 micrograms. The chain is 2.39 kDa venom peptide from Heterometrus spinifer (Asia giant forest scorpion).